Here is a 122-residue protein sequence, read N- to C-terminus: MIQTQSKLDVADNTGAKSVMCIKVLGGSKRRYASVGDVIKVSIKEAAPRGRVKKGEVYSAVVVRTAKGIRRGDGSLVKFDGNAAVLLNAKLEPIGTRIFGPVTRELRTEKFMKIVSLAPEVL.

The protein belongs to the universal ribosomal protein uL14 family. In terms of assembly, part of the 50S ribosomal subunit. Forms a cluster with proteins L3 and L19. In the 70S ribosome, L14 and L19 interact and together make contacts with the 16S rRNA in bridges B5 and B8.

Functionally, binds to 23S rRNA. Forms part of two intersubunit bridges in the 70S ribosome. This chain is Large ribosomal subunit protein uL14, found in Polaromonas naphthalenivorans (strain CJ2).